The chain runs to 312 residues: MANIVFKLSDKDITTLMSRITFDTENLPQGMKARAKYQNTTVNIYQSGKVMFQGNHAEAVSKELLPQHSQLNTNKTKKKNMANSFLEQTLMYDQFNCIGSDEAGSGDYFGPLTVCAAFVTKEHVPILKTLGVDDSKKLTDTKIVELADQLVTFIPHSLLTLHNEKYNIQQAKGWTQVKMKAVLHNEAIKNVLEKIDSSQLDYIVIDQFAKREVYNHYALSDIPLPKKTKFETKGESKSLAIAVASIISRYAFVTYMDQISKNINMTIPKGAGAKVDVIAAKIIKKYGLSHLDTISKKHFKNREKAQKILKPL.

The RNase H type-2 domain maps to 95-311 (FNCIGSDEAG…REKAQKILKP (217 aa)). Positions 101, 102, and 206 each coordinate a divalent metal cation.

This sequence belongs to the RNase HII family. RnhC subfamily. The cofactor is Mn(2+). It depends on Mg(2+) as a cofactor.

Its subcellular location is the cytoplasm. The enzyme catalyses Endonucleolytic cleavage to 5'-phosphomonoester.. Functionally, endonuclease that specifically degrades the RNA of RNA-DNA hybrids. The sequence is that of Ribonuclease HIII from Staphylococcus aureus (strain MSSA476).